Consider the following 298-residue polypeptide: ATP synthase gamma chain (298 aa).

Belongs to the ATPase gamma chain family. F-type ATPases have 2 components, CF(1) - the catalytic core - and CF(0) - the membrane proton channel. CF(1) has five subunits: alpha(3), beta(3), gamma(1), delta(1), epsilon(1). CF(0) has three main subunits: a, b and c.

It localises to the cell inner membrane. Produces ATP from ADP in the presence of a proton gradient across the membrane. The gamma chain is believed to be important in regulating ATPase activity and the flow of protons through the CF(0) complex. The polypeptide is ATP synthase gamma chain (Francisella philomiragia subsp. philomiragia (strain ATCC 25017 / CCUG 19701 / FSC 153 / O#319-036)).